Consider the following 50-residue polypeptide: Cytochrome c-555 (50 aa).

Residues Cys-7, Cys-10, His-11, and Met-25 each contribute to the heme site.

Post-translationally, binds 1 heme group per subunit.

It is found in the cell membrane. The polypeptide is Cytochrome c-555 (Schinkia azotoformans (Bacillus azotoformans)).